The chain runs to 584 residues: Phenylalanine--tRNA ligase beta subunit (584 aa).

One can recognise a B5 domain in the interval 290 to 369 (FSVRTKTVTH…RALGFNSLEP (80 aa)). Mg(2+) contacts are provided by aspartate 347, aspartate 353, aspartate 356, and aspartate 357.

Belongs to the phenylalanyl-tRNA synthetase beta subunit family. Type 2 subfamily. In terms of assembly, tetramer of two alpha and two beta subunits. The cofactor is Mg(2+).

The protein localises to the cytoplasm. The catalysed reaction is tRNA(Phe) + L-phenylalanine + ATP = L-phenylalanyl-tRNA(Phe) + AMP + diphosphate + H(+). This chain is Phenylalanine--tRNA ligase beta subunit, found in Haloarcula marismortui (strain ATCC 43049 / DSM 3752 / JCM 8966 / VKM B-1809) (Halobacterium marismortui).